The primary structure comprises 392 residues: Chorismate synthase (392 aa).

NADP(+) is bound by residues Arg-40 and Arg-46. FMN contacts are provided by residues 135–137, 256–257, Gly-300, 315–319, and Arg-341; these read RAS, QA, and KPISS.

Belongs to the chorismate synthase family. Homotetramer. FMNH2 serves as cofactor.

The catalysed reaction is 5-O-(1-carboxyvinyl)-3-phosphoshikimate = chorismate + phosphate. The protein operates within metabolic intermediate biosynthesis; chorismate biosynthesis; chorismate from D-erythrose 4-phosphate and phosphoenolpyruvate: step 7/7. Functionally, catalyzes the anti-1,4-elimination of the C-3 phosphate and the C-6 proR hydrogen from 5-enolpyruvylshikimate-3-phosphate (EPSP) to yield chorismate, which is the branch point compound that serves as the starting substrate for the three terminal pathways of aromatic amino acid biosynthesis. This reaction introduces a second double bond into the aromatic ring system. The sequence is that of Chorismate synthase from Salinispora tropica (strain ATCC BAA-916 / DSM 44818 / JCM 13857 / NBRC 105044 / CNB-440).